We begin with the raw amino-acid sequence, 400 residues long: MNDQTRAFLRERFRDYYSRSKVFVPPGLAQREWGFIFHEETVGVAMRRHKAFNSEGELADYLRSMPPAHAYHSAAYYRHPQAPTMQEKDWLGADLIFDLDADHLPGVKNMTYGEMLDNVKVEIIRLIDEFLIDDLGFREKDMDIVFSGGRGYHVHVRDERVRTLKSPERREIVDYLLGTGLEPDRMFIRTNQRIDTGTTSVAGVWLIRGFDSVPGGWDRRVARHIVEKLDQIGRLPDKDAKEALRAFSLESKDVKRILHVARDPASLQKIREKGLIELSGNLEGFFRSILAGTIDQFKVSLAGKTDEPVTADIKRLIRLPGSIHGGSSFRVTPLTRAQLESFNPLEDAIIFSDDPVRVLVTRPAVVEMKGKIYRVSEGVGRLPENVAMFLMCRGSADYEP.

Residues Asp98, Asp100, and Asp306 contribute to the active site.

The protein belongs to the eukaryotic-type primase small subunit family. Heterodimer of a small subunit (PriS) and a large subunit (PriL). It depends on Mg(2+) as a cofactor. Mn(2+) serves as cofactor.

Catalytic subunit of DNA primase, an RNA polymerase that catalyzes the synthesis of short RNA molecules used as primers for DNA polymerase during DNA replication. The small subunit contains the primase catalytic core and has DNA synthesis activity on its own. Binding to the large subunit stabilizes and modulates the activity, increasing the rate of DNA synthesis while decreasing the length of the DNA fragments, and conferring RNA synthesis capability. The DNA polymerase activity may enable DNA primase to also catalyze primer extension after primer synthesis. May also play a role in DNA repair. This is DNA primase small subunit PriS from Methanocella arvoryzae (strain DSM 22066 / NBRC 105507 / MRE50).